The chain runs to 378 residues: Succinyl-diaminopimelate desuccinylase (378 aa).

H68 is a Zn(2+) binding site. Residue D70 is part of the active site. D102 is a binding site for Zn(2+). E136 functions as the Proton acceptor in the catalytic mechanism. Zn(2+) contacts are provided by E137, E165, and H351.

It belongs to the peptidase M20A family. DapE subfamily. Homodimer. It depends on Zn(2+) as a cofactor. Co(2+) is required as a cofactor.

It catalyses the reaction N-succinyl-(2S,6S)-2,6-diaminopimelate + H2O = (2S,6S)-2,6-diaminopimelate + succinate. It participates in amino-acid biosynthesis; L-lysine biosynthesis via DAP pathway; LL-2,6-diaminopimelate from (S)-tetrahydrodipicolinate (succinylase route): step 3/3. Its function is as follows. Catalyzes the hydrolysis of N-succinyl-L,L-diaminopimelic acid (SDAP), forming succinate and LL-2,6-diaminopimelate (DAP), an intermediate involved in the bacterial biosynthesis of lysine and meso-diaminopimelic acid, an essential component of bacterial cell walls. In Pseudomonas syringae pv. syringae, this protein is Succinyl-diaminopimelate desuccinylase.